Here is a 243-residue protein sequence, read N- to C-terminus: Anti-H(O) lectin 2 (243 aa).

A glycan (N-linked (GlcNAc...) asparagine) is linked at asparagine 115. Residues glutamate 127 and aspartate 129 each contribute to the Mn(2+) site. 3 residues coordinate Ca(2+): aspartate 129, asparagine 136, and aspartate 139. Aspartate 139 and histidine 144 together coordinate Mn(2+).

This sequence belongs to the leguminous lectin family. As to quaternary structure, homodimer.

Lactose- or galactose-binding anti-H(O) lectin. The polypeptide is Anti-H(O) lectin 2 (Cytisophyllum sessilifolium (Sessile-leaved cytisus)).